Here is an 88-residue protein sequence, read N- to C-terminus: Small ribosomal subunit protein uS19 (88 aa).

The protein belongs to the universal ribosomal protein uS19 family.

Protein S19 forms a complex with S13 that binds strongly to the 16S ribosomal RNA. This Ureaplasma parvum serovar 3 (strain ATCC 27815 / 27 / NCTC 11736) protein is Small ribosomal subunit protein uS19.